A 103-amino-acid polypeptide reads, in one-letter code: Nucleoid-associated protein BH0035 (103 aa).

The segment covering 1–20 (MKNMGQMMKQMQKMQKQMMK) has biased composition (low complexity). The segment at 1-29 (MKNMGQMMKQMQKMQKQMMKAQEELKEKT) is disordered.

It belongs to the YbaB/EbfC family. In terms of assembly, homodimer.

The protein resides in the cytoplasm. Its subcellular location is the nucleoid. Its function is as follows. Binds to DNA and alters its conformation. May be involved in regulation of gene expression, nucleoid organization and DNA protection. This Halalkalibacterium halodurans (strain ATCC BAA-125 / DSM 18197 / FERM 7344 / JCM 9153 / C-125) (Bacillus halodurans) protein is Nucleoid-associated protein BH0035.